We begin with the raw amino-acid sequence, 180 residues long: MSKIKQIIIVEGKTDSDKLKRIYGNDLKTIQTKGLSINKKTLEMIKEFNNKTGVIIFTDPDGAGKKIRQTIIDYLDNKVLNAFIKKDDISKTSKKVGIAEASDDAIKKALDNLIIYDKNNVSLSWTDYINNNFYLKSNRIVICKYFNFDNNISSKTLFKWLNWMNVSIDDIKKIIGEYES.

Positions 5-90 constitute a Toprim domain; it reads KQIIIVEGKT…NAFIKKDDIS (86 aa). Mg(2+)-binding residues include Glu-11, Asp-59, and Asp-61.

The protein belongs to the ribonuclease M5 family. The cofactor is Mg(2+).

The protein localises to the cytoplasm. The catalysed reaction is Endonucleolytic cleavage of RNA, removing 21 and 42 nucleotides, respectively, from the 5'- and 3'-termini of a 5S-rRNA precursor.. In terms of biological role, required for correct processing of both the 5' and 3' ends of 5S rRNA precursor. Cleaves both sides of a double-stranded region yielding mature 5S rRNA in one step. The polypeptide is Ribonuclease M5 (Mycoplasma capricolum subsp. capricolum (strain California kid / ATCC 27343 / NCTC 10154)).